The chain runs to 559 residues: Potassium-transporting ATPase potassium-binding subunit (559 aa).

Transmembrane regions (helical) follow at residues 5-25, 63-83, 132-152, 170-190, 250-270, 283-303, 329-349, 356-376, 379-399, 416-436, 484-504, and 524-544; these read GFLL…PLGV, LLAI…MLLG, GLTV…FALI, LVRI…LLFI, LTNM…CFAF, LLWA…SAEV, VLVS…AVIA, ALGG…FGGV, GLYG…LMIG, MTAL…ALAM, LLAF…MAIA, and GALF…LTFI.

Belongs to the KdpA family. As to quaternary structure, the system is composed of three essential subunits: KdpA, KdpB and KdpC.

It is found in the cell inner membrane. Its function is as follows. Part of the high-affinity ATP-driven potassium transport (or Kdp) system, which catalyzes the hydrolysis of ATP coupled with the electrogenic transport of potassium into the cytoplasm. This subunit binds the periplasmic potassium ions and delivers the ions to the membrane domain of KdpB through an intramembrane tunnel. This is Potassium-transporting ATPase potassium-binding subunit from Citrobacter koseri (strain ATCC BAA-895 / CDC 4225-83 / SGSC4696).